Consider the following 243-residue polypeptide: Derlin-1.2 (243 aa).

The Cytoplasmic portion of the chain corresponds to 1–20 (MSSPAEYYKSLPPISKAYGT). Residues 21–41 (LCFFTTVLVRLHILNPLFLYL) traverse the membrane as a helical segment. Over 42-54 (YYPRVFKKFEVWR) the chain is Lumenal. The helical transmembrane segment at 55–75 (IFTSFFFLGPFSINFGIRLLM) threads the bilayer. Residues 76–94 (IARYGVMLEKGAFDKRTAD) lie on the Cytoplasmic side of the membrane. The chain crosses the membrane as a helical span at residues 95–115 (FLWMMIFGAISLLVLSVIPQL). The Lumenal segment spans residues 116-155 (NTYVLGLPMVSMLVYVWSRENPNAQINIYGILQLKAFYLP). Residues 156-176 (WVMLLLDVIFGSPLMPGLLGI) form a helical membrane-spanning segment. Residues 177–243 (MVGHLYYYFA…FRGRSYRLNQ (67 aa)) are Cytoplasmic-facing.

It belongs to the derlin family. Expressed in roots and endosperm.

It localises to the endoplasmic reticulum membrane. Its function is as follows. May be involved in the degradation process of specific misfolded endoplasmic reticulum (ER) luminal proteins. The protein is Derlin-1.2 (DER1.2) of Zea mays (Maize).